A 202-amino-acid polypeptide reads, in one-letter code: uncharacterized protein (202 aa).

The Smr domain occupies 116-196 (LDLHGMTCSE…GKGTTWVLLK (81 aa)).

This is an uncharacterized protein from Treponema pallidum (strain Nichols).